Here is a 612-residue protein sequence, read N- to C-terminus: Dihydroxy-acid dehydratase (612 aa).

Position 81 (Asp81) interacts with Mg(2+). Cys122 provides a ligand contact to [2Fe-2S] cluster. Asp123 and Lys124 together coordinate Mg(2+). At Lys124 the chain carries N6-carboxylysine. [2Fe-2S] cluster is bound at residue Cys195. Glu491 contacts Mg(2+). Catalysis depends on Ser517, which acts as the Proton acceptor.

It belongs to the IlvD/Edd family. As to quaternary structure, homodimer. The cofactor is [2Fe-2S] cluster. It depends on Mg(2+) as a cofactor.

The enzyme catalyses (2R)-2,3-dihydroxy-3-methylbutanoate = 3-methyl-2-oxobutanoate + H2O. It carries out the reaction (2R,3R)-2,3-dihydroxy-3-methylpentanoate = (S)-3-methyl-2-oxopentanoate + H2O. Its pathway is amino-acid biosynthesis; L-isoleucine biosynthesis; L-isoleucine from 2-oxobutanoate: step 3/4. It functions in the pathway amino-acid biosynthesis; L-valine biosynthesis; L-valine from pyruvate: step 3/4. Its function is as follows. Functions in the biosynthesis of branched-chain amino acids. Catalyzes the dehydration of (2R,3R)-2,3-dihydroxy-3-methylpentanoate (2,3-dihydroxy-3-methylvalerate) into 2-oxo-3-methylpentanoate (2-oxo-3-methylvalerate) and of (2R)-2,3-dihydroxy-3-methylbutanoate (2,3-dihydroxyisovalerate) into 2-oxo-3-methylbutanoate (2-oxoisovalerate), the penultimate precursor to L-isoleucine and L-valine, respectively. The sequence is that of Dihydroxy-acid dehydratase from Haemophilus influenzae (strain PittEE).